A 190-amino-acid chain; its full sequence is Peptidyl-tRNA hydrolase (190 aa).

TRNA is bound at residue Y18. Catalysis depends on H23, which acts as the Proton acceptor. TRNA is bound by residues F69, N71, and N117.

The protein belongs to the PTH family. As to quaternary structure, monomer.

The protein resides in the cytoplasm. The enzyme catalyses an N-acyl-L-alpha-aminoacyl-tRNA + H2O = an N-acyl-L-amino acid + a tRNA + H(+). In terms of biological role, hydrolyzes ribosome-free peptidyl-tRNAs (with 1 or more amino acids incorporated), which drop off the ribosome during protein synthesis, or as a result of ribosome stalling. Its function is as follows. Catalyzes the release of premature peptidyl moieties from peptidyl-tRNA molecules trapped in stalled 50S ribosomal subunits, and thus maintains levels of free tRNAs and 50S ribosomes. In Rhodococcus opacus (strain B4), this protein is Peptidyl-tRNA hydrolase.